A 271-amino-acid chain; its full sequence is Thiazole synthase (271 aa).

Lys104 functions as the Schiff-base intermediate with DXP in the catalytic mechanism. Residues Gly165, 192–193 (AG), and 214–215 (NT) contribute to the 1-deoxy-D-xylulose 5-phosphate site.

It belongs to the ThiG family. Homotetramer. Forms heterodimers with either ThiH or ThiS.

The protein resides in the cytoplasm. It carries out the reaction [ThiS sulfur-carrier protein]-C-terminal-Gly-aminoethanethioate + 2-iminoacetate + 1-deoxy-D-xylulose 5-phosphate = [ThiS sulfur-carrier protein]-C-terminal Gly-Gly + 2-[(2R,5Z)-2-carboxy-4-methylthiazol-5(2H)-ylidene]ethyl phosphate + 2 H2O + H(+). It participates in cofactor biosynthesis; thiamine diphosphate biosynthesis. In terms of biological role, catalyzes the rearrangement of 1-deoxy-D-xylulose 5-phosphate (DXP) to produce the thiazole phosphate moiety of thiamine. Sulfur is provided by the thiocarboxylate moiety of the carrier protein ThiS. In vitro, sulfur can be provided by H(2)S. The protein is Thiazole synthase of Burkholderia mallei (strain ATCC 23344).